The following is a 429-amino-acid chain: UDP-N-acetylglucosamine 1-carboxyvinyltransferase 2 (429 aa).

22-23 is a phosphoenolpyruvate binding site; the sequence is KN. UDP-N-acetyl-alpha-D-glucosamine is bound at residue arginine 92. The active-site Proton donor is the cysteine 116. 2-(S-cysteinyl)pyruvic acid O-phosphothioketal is present on cysteine 116. Residues 121 to 125, aspartate 305, and isoleucine 327 each bind UDP-N-acetyl-alpha-D-glucosamine; that span reads RPIDQ.

It belongs to the EPSP synthase family. MurA subfamily.

Its subcellular location is the cytoplasm. It carries out the reaction phosphoenolpyruvate + UDP-N-acetyl-alpha-D-glucosamine = UDP-N-acetyl-3-O-(1-carboxyvinyl)-alpha-D-glucosamine + phosphate. Its pathway is cell wall biogenesis; peptidoglycan biosynthesis. In terms of biological role, cell wall formation. Adds enolpyruvyl to UDP-N-acetylglucosamine. The chain is UDP-N-acetylglucosamine 1-carboxyvinyltransferase 2 from Bacillus subtilis (strain 168).